The chain runs to 386 residues: Alcohol dehydrogenase-like 2 (386 aa).

Positions 51, 53, 74, 104, 107, 110, 118, and 183 each coordinate Zn(2+). 2 residues coordinate an alcohol: Thr-53 and His-74. Thr-53 lines the NAD(+) pocket. NAD(+)-binding positions include 208–213 (GLGAVG), Asp-232, Lys-237, 302–304 (LGM), Phe-329, and Arg-379.

It belongs to the zinc-containing alcohol dehydrogenase family. Class-III subfamily. As to quaternary structure, homodimer. Requires Zn(2+) as cofactor.

Its subcellular location is the cytoplasm. The enzyme catalyses a primary alcohol + NAD(+) = an aldehyde + NADH + H(+). It catalyses the reaction a secondary alcohol + NAD(+) = a ketone + NADH + H(+). The polypeptide is Alcohol dehydrogenase-like 2 (Arabidopsis thaliana (Mouse-ear cress)).